Here is a 411-residue protein sequence, read N- to C-terminus: Dual-specificity RNA methyltransferase RlmN (411 aa).

The active-site Proton acceptor is glutamate 125. Positions 131 to 380 constitute a Radical SAM core domain; that stretch reads EEGRGTLCIS…IRTPRGRDIL (250 aa). Cysteine 138 and cysteine 383 form a disulfide bridge. The [4Fe-4S] cluster site is built by cysteine 145, cysteine 149, and cysteine 152. Residues 209–210, serine 241, 263–265, and asparagine 340 contribute to the S-adenosyl-L-methionine site; these read GE and SLH. Residue cysteine 383 is the S-methylcysteine intermediate of the active site.

It belongs to the radical SAM superfamily. RlmN family. Requires [4Fe-4S] cluster as cofactor.

It is found in the cytoplasm. The enzyme catalyses adenosine(2503) in 23S rRNA + 2 reduced [2Fe-2S]-[ferredoxin] + 2 S-adenosyl-L-methionine = 2-methyladenosine(2503) in 23S rRNA + 5'-deoxyadenosine + L-methionine + 2 oxidized [2Fe-2S]-[ferredoxin] + S-adenosyl-L-homocysteine. The catalysed reaction is adenosine(37) in tRNA + 2 reduced [2Fe-2S]-[ferredoxin] + 2 S-adenosyl-L-methionine = 2-methyladenosine(37) in tRNA + 5'-deoxyadenosine + L-methionine + 2 oxidized [2Fe-2S]-[ferredoxin] + S-adenosyl-L-homocysteine. Specifically methylates position 2 of adenine 2503 in 23S rRNA and position 2 of adenine 37 in tRNAs. m2A2503 modification seems to play a crucial role in the proofreading step occurring at the peptidyl transferase center and thus would serve to optimize ribosomal fidelity. The polypeptide is Dual-specificity RNA methyltransferase RlmN (Brucella melitensis biotype 2 (strain ATCC 23457)).